The primary structure comprises 591 residues: MMRSHYCGQLNESLDGQEITLCGWVHRRRDHGGVIFLDIRDREGLAQVVFDPDRAETFAKADRVRSEYVVKITGKVRLRPAGAVNPNMASGAIEVLGYELDVLNEAETPPFPLNEYTDVGEETRLRYRFIDLRRPEMAEKLKLRSRITSSIRRYLDDNGFLDVETPILTRATPEGARDYLVPSRTHAGSFFALPQSPQLFKQLLMVAGFDRYYQIAKCFRDEDLRADRQPEFTQIDIETSFLDEKDIMDITETMVRNLFKEVLGVEFGELPHMPLAEAMRRFGSDKPDLRIPLELVDVEDQLKDVEFKVFAGPANDPKCRVTALRVPGGASMPRKQIDDYTKFVGIYGAKGLAYIKVNERAAGVDGLQSPIVKNIPLDNINVILDRVGAVDGDIVFFGADKAKIVSEALGALRIKLGHDLNLLTCEWAPLWVVDFPMFEENDDGSLTAMHHPFTSPKCTPEDLEANPAAALSRAYDMVLNGTELGGGSIRIHDKAMQQTVFRVLGISEDEQQEKFGFLLDALKYGAPPHGGLAFGLDRLVMLMTGASSIREVIAFPKTQSAACVMTQAPGVVDAKSLRELHIRLREQAKAE.

Glu-174 contributes to the L-aspartate binding site. The tract at residues 198–201 is aspartate; it reads QLFK. Residue Arg-220 participates in L-aspartate binding. Residues 220–222 and Gln-229 each bind ATP; that span reads RDE. His-450 serves as a coordination point for L-aspartate. Glu-483 contacts ATP. Arg-490 lines the L-aspartate pocket. Residue 535–538 coordinates ATP; the sequence is GLDR.

The protein belongs to the class-II aminoacyl-tRNA synthetase family. Type 1 subfamily. As to quaternary structure, homodimer.

The protein resides in the cytoplasm. The enzyme catalyses tRNA(Asx) + L-aspartate + ATP = L-aspartyl-tRNA(Asx) + AMP + diphosphate. In terms of biological role, aspartyl-tRNA synthetase with relaxed tRNA specificity since it is able to aspartylate not only its cognate tRNA(Asp) but also tRNA(Asn). Reaction proceeds in two steps: L-aspartate is first activated by ATP to form Asp-AMP and then transferred to the acceptor end of tRNA(Asp/Asn). This Ectopseudomonas mendocina (strain ymp) (Pseudomonas mendocina) protein is Aspartate--tRNA(Asp/Asn) ligase.